Reading from the N-terminus, the 503-residue chain is Aspartyl/glutamyl-tRNA(Asn/Gln) amidotransferase subunit B (503 aa).

Belongs to the GatB/GatE family. GatB subfamily. As to quaternary structure, heterotrimer of A, B and C subunits.

The enzyme catalyses L-glutamyl-tRNA(Gln) + L-glutamine + ATP + H2O = L-glutaminyl-tRNA(Gln) + L-glutamate + ADP + phosphate + H(+). It catalyses the reaction L-aspartyl-tRNA(Asn) + L-glutamine + ATP + H2O = L-asparaginyl-tRNA(Asn) + L-glutamate + ADP + phosphate + 2 H(+). Functionally, allows the formation of correctly charged Asn-tRNA(Asn) or Gln-tRNA(Gln) through the transamidation of misacylated Asp-tRNA(Asn) or Glu-tRNA(Gln) in organisms which lack either or both of asparaginyl-tRNA or glutaminyl-tRNA synthetases. The reaction takes place in the presence of glutamine and ATP through an activated phospho-Asp-tRNA(Asn) or phospho-Glu-tRNA(Gln). This Mycolicibacterium smegmatis (strain ATCC 700084 / mc(2)155) (Mycobacterium smegmatis) protein is Aspartyl/glutamyl-tRNA(Asn/Gln) amidotransferase subunit B.